The chain runs to 518 residues: Metal transporter Nramp1 (518 aa).

Transmembrane regions (helical) follow at residues 35-55 (FLSH…PGNM), 68-88 (ELLW…SLSA), 107-127 (PVWV…ASDI), 131-151 (IGTG…GVLI), 172-192 (VVVA…MSIV), 218-238 (IALL…ALVL), 255-275 (FFLF…IAII), 315-337 (SATV…GTYA), 357-377 (LMTR…GGSS), 382-402 (LIVI…IPLL), 418-438 (IYIV…NIYF), and 458-478 (VLIG…VIYL).

Belongs to the NRAMP (TC 2.A.55) family.

Its subcellular location is the membrane. Its function is as follows. Probable metal transporter that may participate in the control of iron homeostasis. The protein is Metal transporter Nramp1 (NRAMP1) of Oryza sativa subsp. japonica (Rice).